The primary structure comprises 150 residues: Large ribosomal subunit protein bL9 (150 aa).

This sequence belongs to the bacterial ribosomal protein bL9 family.

Binds to the 23S rRNA. The protein is Large ribosomal subunit protein bL9 of Burkholderia mallei (strain NCTC 10247).